The following is a 255-amino-acid chain: Ribosomal RNA small subunit methyltransferase G (255 aa).

S-adenosyl-L-methionine-binding positions include Gly-89, Phe-94, 112–114, 140–141, and Arg-159; these read DST and VE.

The protein belongs to the methyltransferase superfamily. RNA methyltransferase RsmG family.

It is found in the cytoplasm. Its function is as follows. Specifically methylates the N7 position of a guanine in 16S rRNA. The protein is Ribosomal RNA small subunit methyltransferase G of Trichodesmium erythraeum (strain IMS101).